Here is a 550-residue protein sequence, read N- to C-terminus: MVRDSFDGGHTGDPERDLAYEREHVRRDTMSDEVVPDDVAQYLIYFKRMIDEENVVEIHNLYEHGFPDLTERYFQQRLWPNEEAVENIVGSGNRIVAFSDSRIFIILYKELYFRHVYTRMQRGPSLAHRFDSYQNYQELFCEVLTPEKQPLSLQLPNVWLWDIIDEFVYQPFCLYKANPGKRSPEEYEDLLSIEQNQSAWNIYPVLNILYSLLAKSQIDEQLLAIREGRNPDDVADDFGRSALYFKLGYFSLIGLLRTHVLLGDYHQALKTVENLELDPKGLYNTVPSCLVTFHYFVGFSHMMMRNYGEATKIFVNCLLYIQRTKSVQQQNQQQKKNFQYDVIGKTNEQLYHLLAICLTLQPQRIDDSIQSQLYERTGERMNHMSNGNIDEFRLAFQQGCPKFLSPTTVVYEGPNQAKEPLLRQCNAFLEEIESQIMLPILRGYLKLYTTLPTRKLASFMDVSDADYDSFVGKLLSFKMIVNELGKECMDRCEIDDSTTDLDFYVDKDMIIIADTKVARRIGEYFIKQIQKLQEVNRKLKELPVIPAVSS.

The interval 1–20 (MVRDSFDGGHTGDPERDLAY) is disordered. The PCI domain occupies 309 to 503 (EATKIFVNCL…IDDSTTDLDF (195 aa)).

Belongs to the eIF-3 subunit L family. In terms of assembly, component of the eukaryotic translation initiation factor 3 (eIF-3) complex.

It is found in the cytoplasm. Functionally, component of the eukaryotic translation initiation factor 3 (eIF-3) complex, which is involved in protein synthesis of a specialized repertoire of mRNAs and, together with other initiation factors, stimulates binding of mRNA and methionyl-tRNAi to the 40S ribosome. The eIF-3 complex specifically targets and initiates translation of a subset of mRNAs involved in cell proliferation. The protein is Eukaryotic translation initiation factor 3 subunit L of Brugia malayi (Filarial nematode worm).